We begin with the raw amino-acid sequence, 93 residues long: Small ribosomal subunit protein uS19 (93 aa).

It belongs to the universal ribosomal protein uS19 family.

Its function is as follows. Protein S19 forms a complex with S13 that binds strongly to the 16S ribosomal RNA. In Blochmanniella floridana, this protein is Small ribosomal subunit protein uS19.